Reading from the N-terminus, the 279-residue chain is Thymidylate synthase (279 aa).

A dUMP-binding site is contributed by 133–134; sequence RR. The active-site Nucleophile is the Cys-154. Residues 178-181, Asn-189, and 219-221 contribute to the dUMP site; these read RSND and HIY. Asp-181 contacts (6R)-5,10-methylene-5,6,7,8-tetrahydrofolate. (6R)-5,10-methylene-5,6,7,8-tetrahydrofolate is bound at residue Ala-278.

This sequence belongs to the thymidylate synthase family. Bacterial-type ThyA subfamily. In terms of assembly, homodimer.

The protein localises to the cytoplasm. The catalysed reaction is dUMP + (6R)-5,10-methylene-5,6,7,8-tetrahydrofolate = 7,8-dihydrofolate + dTMP. The protein operates within pyrimidine metabolism; dTTP biosynthesis. Its function is as follows. Catalyzes the reductive methylation of 2'-deoxyuridine-5'-monophosphate (dUMP) to 2'-deoxythymidine-5'-monophosphate (dTMP) while utilizing 5,10-methylenetetrahydrofolate (mTHF) as the methyl donor and reductant in the reaction, yielding dihydrofolate (DHF) as a by-product. This enzymatic reaction provides an intracellular de novo source of dTMP, an essential precursor for DNA biosynthesis. The sequence is that of Thymidylate synthase from Streptococcus suis (strain 05ZYH33).